The following is a 146-amino-acid chain: Snaclec stejaggregin-B subunit beta-1 (146 aa).

An N-terminal signal peptide occupies residues 1–23; that stretch reads MGRFIFVSFGLLVVFLSLSGTGA. Disulfide bonds link cysteine 25–cysteine 36, cysteine 53–cysteine 142, and cysteine 119–cysteine 134. Positions 32 to 143 constitute a C-type lectin domain; the sequence is YDLYCYRVFQ…CSQTYPFVCK (112 aa).

This sequence belongs to the snaclec family. As to quaternary structure, heteromultimer; disulfide-linked. As to expression, expressed by the venom gland.

Its subcellular location is the secreted. Functionally, interferes with one step of hemostasis (modulation of platelet aggregation, or coagulation cascade, for example). This is Snaclec stejaggregin-B subunit beta-1 from Trimeresurus stejnegeri (Chinese green tree viper).